Reading from the N-terminus, the 75-residue chain is Protein Tlp homolog (75 aa).

A disordered region spans residues 53–75; the sequence is REALDGMREEIKDEARDKKNGYM.

This sequence belongs to the Tlp family.

This is Protein Tlp homolog from Clostridium botulinum (strain ATCC 19397 / Type A).